Here is a 135-residue protein sequence, read N- to C-terminus: Ribosomal RNA large subunit methyltransferase H (135 aa).

Residues L52, G83, and 102–107 (LSSLTL) each bind S-adenosyl-L-methionine.

Belongs to the RNA methyltransferase RlmH family. Homodimer.

Its subcellular location is the cytoplasm. The catalysed reaction is pseudouridine(1915) in 23S rRNA + S-adenosyl-L-methionine = N(3)-methylpseudouridine(1915) in 23S rRNA + S-adenosyl-L-homocysteine + H(+). Functionally, specifically methylates the pseudouridine at position 1915 (m3Psi1915) in 23S rRNA. The sequence is that of Ribosomal RNA large subunit methyltransferase H from Polynucleobacter necessarius subsp. necessarius (strain STIR1).